The chain runs to 352 residues: Putative conjugal transfer protein MT3759 (352 aa).

160 to 167 contacts ATP; that stretch reads GGTGAGKT.

The protein belongs to the GSP E family.

The protein resides in the cytoplasm. The sequence is that of Putative conjugal transfer protein MT3759 from Mycobacterium tuberculosis (strain CDC 1551 / Oshkosh).